Consider the following 179-residue polypeptide: Replication restart protein DnaT (179 aa).

Over residues 151-168 (SRSSNGGMPQRDINSVSE) the composition is skewed to polar residues. Positions 151-179 (SRSSNGGMPQRDINSVSEPDNHIPPGFRG) are disordered.

It belongs to the DnaT family. As to quaternary structure, homooligomerizes. Interacts with PriB. Component of the replication restart primosome. Primosome assembly occurs via a 'hand-off' mechanism. PriA binds to replication forks, subsequently PriB then DnaT bind; DnaT then displaces ssDNA to generate the helicase loading substrate.

Functionally, involved in the restart of stalled replication forks, which reloads the replicative helicase on sites other than the origin of replication. Can function in multiple replication restart pathways. Displaces ssDNA from a PriB-ssDNA complex. Probably forms a spiral filament on ssDNA. The polypeptide is Replication restart protein DnaT (Salmonella heidelberg (strain SL476)).